Reading from the N-terminus, the 289-residue chain is tRNA pseudouridine synthase B (289 aa).

Residue D38 is the Nucleophile of the active site.

This sequence belongs to the pseudouridine synthase TruB family. Type 1 subfamily.

It catalyses the reaction uridine(55) in tRNA = pseudouridine(55) in tRNA. Functionally, responsible for synthesis of pseudouridine from uracil-55 in the psi GC loop of transfer RNAs. This is tRNA pseudouridine synthase B from Clostridium novyi (strain NT).